The sequence spans 271 residues: Carboxy-terminal domain RNA polymerase II polypeptide A small phosphatase 2 (271 aa).

Ser-5 is modified (phosphoserine). The 159-residue stretch at 97–255 folds into the FCP1 homology domain; that stretch reads EDQGRICVVI…LNLIPIFEEL (159 aa). Asp-107 (4-aspartylphosphate intermediate) is an active-site residue. The Mg(2+) site is built by Asp-107, Asp-109, and Asn-218. The active-site Proton donor is Asp-109.

As to quaternary structure, monomer. Interacts with REST. Mg(2+) serves as cofactor. As to expression, expression is restricted to non-neuronal tissues. Highest expression in pancreas and lowest in liver.

It is found in the nucleus. It catalyses the reaction O-phospho-L-seryl-[protein] + H2O = L-seryl-[protein] + phosphate. It carries out the reaction O-phospho-L-threonyl-[protein] + H2O = L-threonyl-[protein] + phosphate. Its function is as follows. Preferentially catalyzes the dephosphorylation of 'Ser-5' within the tandem 7 residue repeats in the C-terminal domain (CTD) of the largest RNA polymerase II subunit POLR2A. Negatively regulates RNA polymerase II transcription, possibly by controlling the transition from initiation/capping to processive transcript elongation. Recruited by REST to neuronal genes that contain RE-1 elements, leading to neuronal gene silencing in non-neuronal cells. May contribute to the development of sarcomas. The chain is Carboxy-terminal domain RNA polymerase II polypeptide A small phosphatase 2 (CTDSP2) from Homo sapiens (Human).